Reading from the N-terminus, the 412-residue chain is Heat stress transcription factor A-3 (412 aa).

The DNA-binding element occupies 53 to 147 (IPPFLSKTFD…LLKNIHRRRS (95 aa)). Residues 144–170 (RRRSPQSNQTCCSSTSQSQGSPTEVGG) are disordered. The segment covering 148-166 (PQSNQTCCSSTSQSQGSPT) has biased composition (low complexity). The segment at 159-225 (SQSQGSPTEV…QLLSFLAKLF (67 aa)) is hydrophobic repeat HR-A/B. A coiled-coil region spans residues 166–224 (TEVGGEIEKLRKERRALMEEMVELQQQSRGTARHVDTVNQRLKAAEQRQKQLLSFLAKL). Residues 238–254 (KGKEKGGALGLEKARKK) carry the Bipartite nuclear localization signal motif. An AHA1 motif is present at residues 277-286 (DDWERLLMYD). Residues 381–390 (DVCWEQFAAG) carry the AHA2 motif.

It belongs to the HSF family. Class A subfamily. Homotrimer. Post-translationally, exhibits temperature-dependent phosphorylation.

It is found in the nucleus. Functionally, transcriptional activator that specifically binds DNA sequence 5'-AGAAnnTTCT-3' known as heat shock promoter elements (HSE). Involved in heat stress response. Activated by DREB2A under heat stress. The polypeptide is Heat stress transcription factor A-3 (HSFA3) (Arabidopsis thaliana (Mouse-ear cress)).